The chain runs to 264 residues: Apolipoprotein A-I (264 aa).

Positions 1-18 (MKAVLLVVAALFLAGSQA) are cleaved as a signal peptide. Repeat copies occupy residues 67–88 (LRLSDNWDTLSTILTKLQADFG) and 89–110 (LATQEFWDTLEKETEWLKQIVS). The segment at 67–264 (LRLSDNWDTL…DQASKQLAAQ (198 aa)) is 10 X approximate tandem repeats. The 3; half-length repeat unit spans residues 111–121 (EDLQDVKHKVQ). Repeat copies occupy residues 122-143 (PYLENFQKKVQEEVEHYREKVR), 144-165 (PLGIELRDGARQKLQELQEKLT), 166-187 (PLGEDLRDRTREHVDVLRTQLA), 188-207 (PFSEEMRQRLAKRLEELKDS), and 208-229 (ATLADYHAKASEHLKMLGEKAK). M193 carries the post-translational modification Methionine sulfoxide. Residues 230-240 (PALEDLRQGLL) form a 9; half-length repeat. Repeat 10 spans residues 241–264 (PVLENLKASILSSIDQASKQLAAQ).

This sequence belongs to the apolipoprotein A1/A4/E family. As to quaternary structure, homodimer. Interacts with APOA1BP and CLU. Component of a sperm activating protein complex (SPAP), consisting of APOA1, an immunoglobulin heavy chain, an immunoglobulin light chain and albumin. Interacts with NDRG1. Interacts with SCGB3A2. Interacts with NAXE and YJEFN3. In terms of processing, glycosylated. Palmitoylated. Post-translationally, phosphorylation sites are present in the extracellular medium.

It localises to the secreted. Its function is as follows. Participates in the reverse transport of cholesterol from tissues to the liver for excretion by promoting cholesterol efflux from tissues and by acting as a cofactor for the lecithin cholesterol acyltransferase (LCAT). As part of the SPAP complex, activates spermatozoa motility. The chain is Apolipoprotein A-I (APOA1) from Cavia porcellus (Guinea pig).